Consider the following 939-residue polypeptide: Valine--tRNA ligase (939 aa).

The 'HIGH' region motif lies at 45 to 55; that stretch reads PNVTGTLHMGH. The short motif at 549 to 553 is the 'KMSKS' region element; it reads KMSKS. Lys-552 is a binding site for ATP. A coiled-coil region spans residues 876 to 939; that stretch reads AAETARLRKE…KIRVQLVKLA (64 aa).

Belongs to the class-I aminoacyl-tRNA synthetase family. ValS type 1 subfamily. As to quaternary structure, monomer.

It is found in the cytoplasm. It catalyses the reaction tRNA(Val) + L-valine + ATP = L-valyl-tRNA(Val) + AMP + diphosphate. Functionally, catalyzes the attachment of valine to tRNA(Val). As ValRS can inadvertently accommodate and process structurally similar amino acids such as threonine, to avoid such errors, it has a 'posttransfer' editing activity that hydrolyzes mischarged Thr-tRNA(Val) in a tRNA-dependent manner. This Chromobacterium violaceum (strain ATCC 12472 / DSM 30191 / JCM 1249 / CCUG 213 / NBRC 12614 / NCIMB 9131 / NCTC 9757 / MK) protein is Valine--tRNA ligase.